An 823-amino-acid chain; its full sequence is Putative ankyrin repeat domain-containing protein 20A3 (823 aa).

ANK repeat units follow at residues 66–95, 99–128, 132–161, 165–194, and 198–227; these read QHRT…QIDV, ENRT…NPNL, YGNT…HIEA, DNNT…SSHA, and LRRS…DVFA. 2 disordered regions span residues 301 to 343 and 355 to 402; these read VPEK…EVED and VQTL…LSEN. Residues 372 to 384 are compositionally biased toward basic and acidic residues; it reads QERHERSEKKQPQ. Coiled-coil stretches lie at residues 431-480, 571-724, and 776-805; these read KKLK…KQLE, AFRY…NNST, and LVLE…EKTE.

This Homo sapiens (Human) protein is Putative ankyrin repeat domain-containing protein 20A3.